Reading from the N-terminus, the 99-residue chain is Nucleoid-associated protein LL0120 (99 aa).

The protein belongs to the YbaB/EbfC family. Homodimer.

The protein localises to the cytoplasm. The protein resides in the nucleoid. In terms of biological role, binds to DNA and alters its conformation. May be involved in regulation of gene expression, nucleoid organization and DNA protection. This is Nucleoid-associated protein LL0120 (ybcG) from Lactococcus lactis subsp. lactis (strain IL1403) (Streptococcus lactis).